Reading from the N-terminus, the 319-residue chain is Acetyl-coenzyme A carboxylase carboxyl transferase subunit alpha (319 aa).

The 262-residue stretch at 32–293 (NVDIEVRALE…KAVLLNELEA (262 aa)) folds into the CoA carboxyltransferase C-terminal domain.

The protein belongs to the AccA family. As to quaternary structure, acetyl-CoA carboxylase is a heterohexamer composed of biotin carboxyl carrier protein (AccB), biotin carboxylase (AccC) and two subunits each of ACCase subunit alpha (AccA) and ACCase subunit beta (AccD).

Its subcellular location is the cytoplasm. The enzyme catalyses N(6)-carboxybiotinyl-L-lysyl-[protein] + acetyl-CoA = N(6)-biotinyl-L-lysyl-[protein] + malonyl-CoA. It functions in the pathway lipid metabolism; malonyl-CoA biosynthesis; malonyl-CoA from acetyl-CoA: step 1/1. Functionally, component of the acetyl coenzyme A carboxylase (ACC) complex. First, biotin carboxylase catalyzes the carboxylation of biotin on its carrier protein (BCCP) and then the CO(2) group is transferred by the carboxyltransferase to acetyl-CoA to form malonyl-CoA. This chain is Acetyl-coenzyme A carboxylase carboxyl transferase subunit alpha, found in Xylella fastidiosa (strain Temecula1 / ATCC 700964).